The following is a 470-amino-acid chain: MQTKSAGFNAGVQDYRLTYYTPDYTPKDTDLLACFRMTPQPGVPPEECAAAVAAESSTGTWTTVWTDGLTDLDRYKGRCYNVEPVPGEDNQYFCFVAYPLDLFEEGSVTNVLTSLVGNVFGFKALRALRLEDIRFPVALIKTYQGPPHGITVERDLLNKYGRPLLGCTIKPKLGLSAKNYGRAVYECLRGGLDFTKDDENINSQPFMRWRDRFLFVQEAIEKSQAETNEVKGHYLNVTAGTCEEMLKRAEFAKEIGTPIIMHDFLTGGFTANTTLAKWCRDNGVLLHIHRAMHAVIDRQKNHGIHFRVLAKCLRLSGGDHLHSGTVVGKLEGDRAATLGFVDLMREDYVEEDRSRGVFFTQDYASLPGTMPVASGGIHVWHMPALVEIFGDDSCLQFGGGTLGHPWGNAPGATANRVALEACVQARNEGRSLAREGNDVLREAGKWSPELAAALDLWKEIKFEFDTVDTL.

The substrate site is built by Asn118 and Thr168. The active-site Proton acceptor is the Lys170. A substrate-binding site is contributed by Lys172. Residues Lys196, Asp198, and Glu199 each coordinate Mg(2+). Lys196 is modified (N6-carboxylysine). His289 serves as the catalytic Proton acceptor. Positions 290, 322, and 374 each coordinate substrate. Positions 459–465 match the Interacts with RbcX2 motif; the sequence is EIKFEFD.

Belongs to the RuBisCO large chain family. Type I subfamily. In terms of assembly, heterohexadecamer of 8 large chains and 8 small chains; disulfide-linked. The disulfide link is formed within the large subunit homodimers. The cofactor is Mg(2+). Post-translationally, the disulfide bond which can form in the large chain dimeric partners within the hexadecamer appears to be associated with oxidative stress and protein turnover.

The protein localises to the carboxysome. The catalysed reaction is 2 (2R)-3-phosphoglycerate + 2 H(+) = D-ribulose 1,5-bisphosphate + CO2 + H2O. The enzyme catalyses D-ribulose 1,5-bisphosphate + O2 = 2-phosphoglycolate + (2R)-3-phosphoglycerate + 2 H(+). Its function is as follows. RuBisCO catalyzes two reactions: the carboxylation of D-ribulose 1,5-bisphosphate, the primary event in carbon dioxide fixation, as well as the oxidative fragmentation of the pentose substrate in the photorespiration process. Both reactions occur simultaneously and in competition at the same active site. In Picosynechococcus sp. (strain ATCC 27264 / PCC 7002 / PR-6) (Agmenellum quadruplicatum), this protein is Ribulose bisphosphate carboxylase large chain.